The following is a 206-amino-acid chain: Protein GET1 (206 aa).

At 1-4 the chain is on the lumenal side; the sequence is MPSL. Residues 5–24 traverse the membrane as a helical segment; that stretch reads LITALFLNVIIYVINTVGAA. At 25 to 110 the chain is on the cytoplasmic side; the sequence is TVDGLLWLLY…TFDITIKIAR (86 aa). Residues 75–100 are a coiled coil; sequence AKLRRRHDKALEAYEAKNNELTQSKS. A helical membrane pass occupies residues 111–131; the sequence is WAATSGLMLFLQFWYSKTPIF. Residues 132 to 155 lie on the Lumenal side of the membrane; that stretch reads TLPPGWIPWQVQWVLSFPRAPMGT. The chain crosses the membrane as a helical span at residues 156-172; that stretch reads VSIQIWSGACATVVALV. The Cytoplasmic portion of the chain corresponds to 173–206; that stretch reads GDAMKASLAYVSKPKIDRIKLGATMEGKEGKKRQ.

This sequence belongs to the WRB/GET1 family. As to quaternary structure, interacts with GET3.

It is found in the endoplasmic reticulum membrane. Functionally, required for the post-translational delivery of tail-anchored (TA) proteins to the endoplasmic reticulum. Acts as a membrane receptor for soluble GET3, which recognizes and selectively binds the transmembrane domain of TA proteins in the cytosol. The sequence is that of Protein GET1 from Ajellomyces capsulatus (strain H143) (Darling's disease fungus).